The following is a 367-amino-acid chain: Probable trehalose-phosphate phosphatase 4 (367 aa).

Belongs to the trehalose phosphatase family. It depends on a divalent metal cation as a cofactor.

It carries out the reaction alpha,alpha-trehalose 6-phosphate + H2O = alpha,alpha-trehalose + phosphate. It participates in glycan biosynthesis; trehalose biosynthesis. Its function is as follows. Removes the phosphate from trehalose 6-phosphate to produce free trehalose. Trehalose accumulation in plant may improve abiotic stress tolerance. This Oryza sativa subsp. japonica (Rice) protein is Probable trehalose-phosphate phosphatase 4 (TPP4).